Here is a 179-residue protein sequence, read N- to C-terminus: QVLVDLDGDPLYNGMSYYILPVARGKGGGLELARTGSESCPRTVVQTRSETSRGLPARLASPYRILIGSNIPLTIEFQPQKPYSCHGHSSRSLQWKVEKTQMVKIASSDEEQRLFGPFQIQPYRNHYKLVYCESESRNHHDDCRDLGISIDDQQNRLLVVKNGDPLVVQFAKANRGGDD.

Position 1 is a pyrrolidone carboxylic acid (Gln-1). Disulfide bonds link Cys-40–Cys-85 and Cys-132–Cys-143.

The protein belongs to the protease inhibitor I3 (leguminous Kunitz-type inhibitor) family. Heterodimer of an alpha and a beta chain linked by a disulfide bond. As to expression, abundant in dry seeds.

It is found in the secreted. Its function is as follows. Inhibits trypsin, plasmin, human plasma kallikrein, chymotrypsin and factor XIIa activity. The polypeptide is Trypsin inhibitor (Leucaena leucocephala (White popinac)).